The chain runs to 351 residues: tRNA pseudouridine synthase D (351 aa).

The active-site Nucleophile is aspartate 81. Residues 158–304 (GVPNYFGSQR…MRHERRAIEL (147 aa)) enclose the TRUD domain.

It belongs to the pseudouridine synthase TruD family.

The enzyme catalyses uridine(13) in tRNA = pseudouridine(13) in tRNA. In terms of biological role, responsible for synthesis of pseudouridine from uracil-13 in transfer RNAs. The protein is tRNA pseudouridine synthase D of Aliivibrio fischeri (strain MJ11) (Vibrio fischeri).